Reading from the N-terminus, the 697-residue chain is uncharacterized protein (697 aa).

A run of 14 helical transmembrane segments spans residues 65-85 (PVRN…VGIY), 106-126 (CTFR…LHNF), 131-151 (YRQS…EKAI), 163-183 (DAAL…DINE), 194-214 (LSSY…VPLG), 227-247 (TSAT…TASI), 286-306 (STNA…ANKD), 316-336 (PVTD…VLLE), 361-381 (SDEI…PEGV), 394-414 (MFEL…MAWE), 419-439 (ERML…EPYH), 450-470 (SVKR…YLAI), 487-507 (QGSQ…YKVW), and 558-578 (TSAG…HHRQ). A disordered region spans residues 246 to 321 (SINVRTSATT…NRFHPVTDIN (76 aa)). Residues 251-298 (TSATTTESTNSNTNATTTESTNSSTNATTTASTNSSTNATTTESTNAS) show a composition bias toward low complexity. Basic and acidic residues predominate over residues 299-321 (AKEDANKDGNAEDNRFHPVTDIN).

It localises to the membrane. This is an uncharacterized protein from Saccharomyces cerevisiae (strain ATCC 204508 / S288c) (Baker's yeast).